Consider the following 691-residue polypeptide: Homeobox protein NOBOX (691 aa).

Basic and acidic residues predominate over residues 94–103 (ELTRGQKAGE). The tract at residues 94–233 (ELTRGQKAGE…NSARATHNPV (140 aa)) is disordered. A compositionally biased stretch (polar residues) spans 216 to 228 (PTSSPGAPNSARA). The homeobox DNA-binding region spans 272 to 363 (RKKTRTLYRS…NRRAKWRKME (92 aa)). Disordered stretches follow at residues 366–385 (NGKESKDNPAAPGPASSQCS), 394–437 (VPME…AQRV), and 635–691 (QALG…SHVP). A compositionally biased stretch (pro residues) spans 395–405 (PMEPKPDPFPQ). A compositionally biased stretch (polar residues) spans 420–432 (TSDQTLAPTQPSE). Over residues 679 to 691 (EEARGDDKNSHVP) the composition is skewed to basic and acidic residues.

In terms of tissue distribution, expressed in ovaries, testes and pancreas. Expressed within all stages of the adult female germline, from primordial follicles through to MII oocytes.

The protein resides in the nucleus. Its function is as follows. Transcription factor which may play a role in oogenesis. Binds preferentially to the DNA sequences 5'-TAATTG-3', 5'-TAGTTG-3' and 5'-TAATTA-3'. This is Homeobox protein NOBOX (NOBOX) from Homo sapiens (Human).